Reading from the N-terminus, the 357-residue chain is Glycerol-3-phosphate dehydrogenase [NAD(P)+] (357 aa).

4 residues coordinate NADPH: Ser30, Phe31, Arg51, and Lys124. Residues Lys124 and Gly152 each contribute to the sn-glycerol 3-phosphate site. NADPH is bound at residue Ala156. Lys207, Asp260, Ser270, Arg271, and Asn272 together coordinate sn-glycerol 3-phosphate. Lys207 (proton acceptor) is an active-site residue. Arg271 contributes to the NADPH binding site. Glu297 contributes to the NADPH binding site.

This sequence belongs to the NAD-dependent glycerol-3-phosphate dehydrogenase family.

It localises to the cytoplasm. The enzyme catalyses sn-glycerol 3-phosphate + NAD(+) = dihydroxyacetone phosphate + NADH + H(+). The catalysed reaction is sn-glycerol 3-phosphate + NADP(+) = dihydroxyacetone phosphate + NADPH + H(+). It functions in the pathway membrane lipid metabolism; glycerophospholipid metabolism. In terms of biological role, catalyzes the reduction of the glycolytic intermediate dihydroxyacetone phosphate (DHAP) to sn-glycerol 3-phosphate (G3P), the key precursor for phospholipid synthesis. The protein is Glycerol-3-phosphate dehydrogenase [NAD(P)+] of Acinetobacter baylyi (strain ATCC 33305 / BD413 / ADP1).